Here is a 227-residue protein sequence, read N- to C-terminus: 2,3-bisphosphoglycerate-dependent phosphoglycerate mutase (227 aa).

Substrate is bound by residues 7–14 (RHGLSEWN), 20–21 (TG), R59, 86–89 (ERHY), K97, 113–114 (RR), and 182–183 (GN). Catalysis depends on H8, which acts as the Tele-phosphohistidine intermediate. E86 functions as the Proton donor/acceptor in the catalytic mechanism.

It belongs to the phosphoglycerate mutase family. BPG-dependent PGAM subfamily. In terms of assembly, homodimer.

It catalyses the reaction (2R)-2-phosphoglycerate = (2R)-3-phosphoglycerate. The protein operates within carbohydrate degradation; glycolysis; pyruvate from D-glyceraldehyde 3-phosphate: step 3/5. Its function is as follows. Catalyzes the interconversion of 2-phosphoglycerate and 3-phosphoglycerate. In Actinobacillus succinogenes (strain ATCC 55618 / DSM 22257 / CCUG 43843 / 130Z), this protein is 2,3-bisphosphoglycerate-dependent phosphoglycerate mutase.